A 668-amino-acid chain; its full sequence is Biotin biosynthesis bifunctional protein BioWF (668 aa).

R293 lines the substrate pocket. 380 to 381 (GY) contributes to the pyridoxal 5'-phosphate binding site. H405 serves as a coordination point for substrate. Residues S451, 476 to 479 (DDAH), and 507 to 510 (TASK) contribute to the pyridoxal 5'-phosphate site. K510 is subject to N6-(pyridoxal phosphate)lysine.

This sequence in the N-terminal section; belongs to the BioW family. It in the C-terminal section; belongs to the class-II pyridoxal-phosphate-dependent aminotransferase family. BioF subfamily. As to quaternary structure, homodimer. Mg(2+) is required as a cofactor. The cofactor is pyridoxal 5'-phosphate.

The catalysed reaction is heptanedioate + ATP + CoA = 6-carboxyhexanoyl-CoA + AMP + diphosphate. It carries out the reaction 6-carboxyhexanoyl-[ACP] + L-alanine + H(+) = (8S)-8-amino-7-oxononanoate + holo-[ACP] + CO2. Its pathway is metabolic intermediate metabolism; pimeloyl-CoA biosynthesis; pimeloyl-CoA from pimelate: step 1/1. It participates in cofactor biosynthesis; biotin biosynthesis. Catalyzes both the decarboxylative condensation of pimeloyl-[acyl-carrier protein] and L-alanine to produce 8-amino-7-oxononanoate (AON), [acyl-carrier protein], and carbon dioxide, and the transformation of pimelate into pimeloyl-CoA with concomitant hydrolysis of ATP to AMP. In Cutibacterium acnes (strain SK137) (Propionibacterium acnes), this protein is Biotin biosynthesis bifunctional protein BioWF.